Reading from the N-terminus, the 543-residue chain is CTP synthase (543 aa).

The interval 1-265 (MTRYIFVTGG…DDFVVERFGL (265 aa)) is amidoligase domain. Residue serine 13 participates in CTP binding. Serine 13 lines the UTP pocket. Residues 14-19 (SLGKGI) and aspartate 71 each bind ATP. 2 residues coordinate Mg(2+): aspartate 71 and glutamate 139. Residues 146–148 (DIE), 186–191 (KTKPTQ), and lysine 222 contribute to the CTP site. UTP-binding positions include 186–191 (KTKPTQ) and lysine 222. The region spanning 290–541 (TIAMVGKYME…VKAALAQHQK (252 aa)) is the Glutamine amidotransferase type-1 domain. Residue glycine 351 coordinates L-glutamine. Catalysis depends on cysteine 378, which acts as the Nucleophile; for glutamine hydrolysis. L-glutamine-binding positions include 379-382 (LGMQ), glutamate 402, and arginine 469. Residues histidine 514 and glutamate 516 contribute to the active site.

It belongs to the CTP synthase family. In terms of assembly, homotetramer.

It carries out the reaction UTP + L-glutamine + ATP + H2O = CTP + L-glutamate + ADP + phosphate + 2 H(+). The catalysed reaction is L-glutamine + H2O = L-glutamate + NH4(+). It catalyses the reaction UTP + NH4(+) + ATP = CTP + ADP + phosphate + 2 H(+). Its pathway is pyrimidine metabolism; CTP biosynthesis via de novo pathway; CTP from UDP: step 2/2. Its activity is regulated as follows. Allosterically activated by GTP, when glutamine is the substrate; GTP has no effect on the reaction when ammonia is the substrate. The allosteric effector GTP functions by stabilizing the protein conformation that binds the tetrahedral intermediate(s) formed during glutamine hydrolysis. Inhibited by the product CTP, via allosteric rather than competitive inhibition. Catalyzes the ATP-dependent amination of UTP to CTP with either L-glutamine or ammonia as the source of nitrogen. Regulates intracellular CTP levels through interactions with the four ribonucleotide triphosphates. The polypeptide is CTP synthase (Pseudomonas syringae pv. tomato (strain ATCC BAA-871 / DC3000)).